A 191-amino-acid polypeptide reads, in one-letter code: D-glycero-beta-D-manno-heptose-1,7-bisphosphate 7-phosphatase (191 aa).

The active-site Nucleophile is Asp11. Mg(2+)-binding residues include Asp11 and Asp13. Substrate is bound by residues 11-13, 19-22, and 53-56; these read DRD, DHGY, and TNQS. Asp13 (proton donor) is an active-site residue. Residues Cys92, His94, Cys107, and Cys109 each contribute to the Zn(2+) site. Residue 110–111 coordinates substrate; that stretch reads RK. Mg(2+) is bound by residues Asp136 and Lys137. Position 137 (Lys137) interacts with substrate.

It belongs to the GmhB family. As to quaternary structure, monomer. Mg(2+) serves as cofactor. Zn(2+) is required as a cofactor.

The protein resides in the cytoplasm. It catalyses the reaction D-glycero-beta-D-manno-heptose 1,7-bisphosphate + H2O = D-glycero-beta-D-manno-heptose 1-phosphate + phosphate. It functions in the pathway nucleotide-sugar biosynthesis; ADP-L-glycero-beta-D-manno-heptose biosynthesis; ADP-L-glycero-beta-D-manno-heptose from D-glycero-beta-D-manno-heptose 7-phosphate: step 2/4. It participates in bacterial outer membrane biogenesis; LPS core biosynthesis. Its function is as follows. Converts the D-glycero-beta-D-manno-heptose 1,7-bisphosphate intermediate into D-glycero-beta-D-manno-heptose 1-phosphate by removing the phosphate group at the C-7 position. In Escherichia coli O157:H7, this protein is D-glycero-beta-D-manno-heptose-1,7-bisphosphate 7-phosphatase (gmhB).